Here is a 255-residue protein sequence, read N- to C-terminus: MDIIPAIDILDGRCVRLYQGNYQLAETYGEDPVAVACNWAKLGAPRLHVVDLDGARQGMPVHLDALEAIVTQVPCPVQFGGGLRSIEAVSAVLDRGVDRVILGTAAVENPALIRECCERFGGRIAVGLDARGGQVAVRGWRETSEVEVTELAGEMEKLGVSAIVYTDILKDGTLTGPNLVELQRLTDAVKVPIIASGGVGTLADVLYLLALEPRGLQGVIIGRALYTGDVDLAEALRAAGPSRWQDLPPDDVAFA.

Asp-8 functions as the Proton acceptor in the catalytic mechanism. Asp-129 serves as the catalytic Proton donor.

Belongs to the HisA/HisF family.

Its subcellular location is the cytoplasm. It carries out the reaction 1-(5-phospho-beta-D-ribosyl)-5-[(5-phospho-beta-D-ribosylamino)methylideneamino]imidazole-4-carboxamide = 5-[(5-phospho-1-deoxy-D-ribulos-1-ylimino)methylamino]-1-(5-phospho-beta-D-ribosyl)imidazole-4-carboxamide. The protein operates within amino-acid biosynthesis; L-histidine biosynthesis; L-histidine from 5-phospho-alpha-D-ribose 1-diphosphate: step 4/9. The polypeptide is 1-(5-phosphoribosyl)-5-[(5-phosphoribosylamino)methylideneamino] imidazole-4-carboxamide isomerase (Gloeobacter violaceus (strain ATCC 29082 / PCC 7421)).